Consider the following 231-residue polypeptide: Cytidylate kinase (231 aa).

Position 17–25 (17–25 (GPTASGKGT)) interacts with ATP.

This sequence belongs to the cytidylate kinase family. Type 1 subfamily.

It is found in the cytoplasm. It catalyses the reaction CMP + ATP = CDP + ADP. The enzyme catalyses dCMP + ATP = dCDP + ADP. This Ralstonia pickettii (strain 12J) protein is Cytidylate kinase.